The sequence spans 26 residues: Alpha-amylase inhibitor 1 (26 aa).

Belongs to the protease inhibitor I6 (cereal trypsin/alpha-amylase inhibitor) family.

The protein localises to the secreted. Alpha-amylase inhibitor. This is Alpha-amylase inhibitor 1 from Saussurea costus (Costus).